The following is a 226-amino-acid chain: Leucyl/phenylalanyl-tRNA--protein transferase (226 aa).

It belongs to the L/F-transferase family.

It localises to the cytoplasm. It carries out the reaction N-terminal L-lysyl-[protein] + L-leucyl-tRNA(Leu) = N-terminal L-leucyl-L-lysyl-[protein] + tRNA(Leu) + H(+). It catalyses the reaction N-terminal L-arginyl-[protein] + L-leucyl-tRNA(Leu) = N-terminal L-leucyl-L-arginyl-[protein] + tRNA(Leu) + H(+). The enzyme catalyses L-phenylalanyl-tRNA(Phe) + an N-terminal L-alpha-aminoacyl-[protein] = an N-terminal L-phenylalanyl-L-alpha-aminoacyl-[protein] + tRNA(Phe). Functions in the N-end rule pathway of protein degradation where it conjugates Leu, Phe and, less efficiently, Met from aminoacyl-tRNAs to the N-termini of proteins containing an N-terminal arginine or lysine. The sequence is that of Leucyl/phenylalanyl-tRNA--protein transferase from Azotobacter vinelandii (strain DJ / ATCC BAA-1303).